Consider the following 416-residue polypeptide: Interleukin-1 receptor type 2 (416 aa).

An N-terminal signal peptide occupies residues 1 to 13 (MFILLVLVTGVSA). Topologically, residues 14–355 (FTTPAVVHTG…FQSLHTTVKE (342 aa)) are extracellular. 3 Ig-like C2-type domains span residues 29 to 136 (PVTS…LELK), 146 to 233 (PLVS…YNIT), and 249 to 357 (PVII…KEVS). Cystine bridges form between Cys42–Cys128, Cys64–Cys120, and Cys164–Cys219. N-linked (GlcNAc...) asparagine glycosylation is found at Asn124, Asn208, Asn231, and Asn289. Cys270 and Cys338 are oxidised to a cystine. Residues 356 to 381 (VSSTFSWGIALAPLSLIILVVGAIWI) traverse the membrane as a helical segment. At 382–416 (RRRCKRQAGKTYGLTKLPTDNQDFPSSPNQIKEMK) the chain is on the cytoplasmic side. Residues 396 to 416 (TKLPTDNQDFPSSPNQIKEMK) are disordered. Residues 399–416 (PTDNQDFPSSPNQIKEMK) are compositionally biased toward polar residues.

It belongs to the interleukin-1 receptor family. In terms of assembly, associates with IL1RAP to form a non-signaling interleukin-1 receptor complex. Post-translationally, a soluble form (sIL1R2) can also be produced by proteolytic cleavage at the cell surface (shedding) involving a metalloproteinase.

It localises to the membrane. The protein resides in the cell membrane. It is found in the secreted. In terms of biological role, non-signaling receptor for IL1A, IL1B and IL1RN. Reduces IL1B activities. Serves as a decoy receptor by competitive binding to IL1B and preventing its binding to IL1R1. Also modulates cellular response through non-signaling association with IL1RAP after binding to IL1B. IL1R2 (membrane and secreted forms) preferentially binds IL1B and poorly IL1A and IL1RN. The secreted IL1R2 recruits secreted IL1RAP with high affinity; this complex formation may be the dominant mechanism for neutralization of IL1B by secreted/soluble receptors. This is Interleukin-1 receptor type 2 (Il1r2) from Rattus norvegicus (Rat).